A 341-amino-acid polypeptide reads, in one-letter code: L-threonine 3-dehydrogenase (341 aa).

Position 38 (cysteine 38) interacts with Zn(2+). Catalysis depends on charge relay system residues threonine 40 and histidine 43. Residues histidine 63, glutamate 64, cysteine 93, cysteine 96, cysteine 99, and cysteine 107 each contribute to the Zn(2+) site. NAD(+) contacts are provided by residues isoleucine 175, aspartate 195, arginine 200, leucine 262–isoleucine 264, and isoleucine 286–tyrosine 287.

The protein belongs to the zinc-containing alcohol dehydrogenase family. As to quaternary structure, homotetramer. The cofactor is Zn(2+).

The protein resides in the cytoplasm. The catalysed reaction is L-threonine + NAD(+) = (2S)-2-amino-3-oxobutanoate + NADH + H(+). It participates in amino-acid degradation; L-threonine degradation via oxydo-reductase pathway; glycine from L-threonine: step 1/2. In terms of biological role, catalyzes the NAD(+)-dependent oxidation of L-threonine to 2-amino-3-ketobutyrate. This Colwellia psychrerythraea (strain 34H / ATCC BAA-681) (Vibrio psychroerythus) protein is L-threonine 3-dehydrogenase.